The following is a 671-amino-acid chain: Fusexin 1 (671 aa).

Residues 1–12 (MRAVSDFLKNKW) lie on the Cytoplasmic side of the membrane. A helical transmembrane segment spans residues 13–33 (VAVPAVALLILSLGFLAQNYI). Residues 34-574 (TGSFVSGDQI…DPFCADGPLE (541 aa)) are Extracellular-facing. Intrachain disulfides connect C145–C180, C409–C452, C480–C500, and C513–C528. The fusion loop stretch occupies residues 168 to 173 (GAIADY). Residues 575–595 (MLSKMFHLVAGTAVAFFTGSL) form a helical membrane-spanning segment. Residues 596-628 (GYRAGRWVDGEYQIKGGFDPLKSRSVSRAKRGR) lie on the Cytoplasmic side of the membrane. The chain crosses the membrane as a helical span at residues 629–649 (FLIGLIAELVSFLLGFYVILL). Residue V650 is a topological domain, extracellular. A helical transmembrane segment spans residues 651–671 (PIWAQLMVILGYVLFKYYTPF).

The protein belongs to the HAP2/GCS1 family. Fusexin 1 subfamily. As to quaternary structure, homotrimer stabilized by interdomain contacts and numerous Ca(2+) and Na(+) ions.

It localises to the cell surface. Its subcellular location is the cell membrane. Exhibits fusogenic activity. Mediates cell-cell fusion in mammalian cells (bilateral fusion). The polypeptide is Fusexin 1 (Natrinema altunense (strain JCM 12890 / CGMCC 1.3731 / AJ2)).